The chain runs to 170 residues: Cytochrome b6-f complex subunit 4 (170 aa).

Transmembrane regions (helical) follow at residues 46-66 (LLFM…GLAV), 105-125 (LLGI…PFIE), and 141-161 (TVFL…TLPL).

It belongs to the cytochrome b family. PetD subfamily. As to quaternary structure, the 4 large subunits of the cytochrome b6-f complex are cytochrome b6, subunit IV (17 kDa polypeptide, PetD), cytochrome f and the Rieske protein, while the 4 small subunits are PetG, PetL, PetM and PetN. The complex functions as a dimer.

The protein localises to the cellular thylakoid membrane. Functionally, component of the cytochrome b6-f complex, which mediates electron transfer between photosystem II (PSII) and photosystem I (PSI), cyclic electron flow around PSI, and state transitions. The sequence is that of Cytochrome b6-f complex subunit 4 from Synechococcus sp. (strain JA-3-3Ab) (Cyanobacteria bacterium Yellowstone A-Prime).